We begin with the raw amino-acid sequence, 246 residues long: Mediator of RNA polymerase II transcription subunit 6 (246 aa).

The segment at 193–246 (VQLKPGEKPVPVDQTKKEAEPIPETVKPEEKETTKNVQQTVSAKGPPEKRMRLQ) is disordered. Basic and acidic residues predominate over residues 206 to 226 (QTKKEAEPIPETVKPEEKETT). K208 is covalently cross-linked (Glycyl lysine isopeptide (Lys-Gly) (interchain with G-Cter in SUMO2)). 2 positions are modified to N6-acetyllysine: K236 and K241.

It belongs to the Mediator complex subunit 6 family. In terms of assembly, component of the Mediator complex, which is composed of MED1, MED4, MED6, MED7, MED8, MED9, MED10, MED11, MED12, MED13, MED13L, MED14, MED15, MED16, MED17, MED18, MED19, MED20, MED21, MED22, MED23, MED24, MED25, MED26, MED27, MED29, MED30, MED31, CCNC, CDK8 and CDC2L6/CDK11. The MED12, MED13, CCNC and CDK8 subunits form a distinct module termed the CDK8 module. Mediator containing the CDK8 module is less active than Mediator lacking this module in supporting transcriptional activation. Individual preparations of the Mediator complex lacking one or more distinct subunits have been variously termed ARC, CRSP, DRIP, PC2, SMCC and TRAP. Interacts with CTNNB1 and GLI3.

The protein resides in the nucleus. Functionally, component of the Mediator complex, a coactivator involved in the regulated transcription of nearly all RNA polymerase II-dependent genes. Mediator functions as a bridge to convey information from gene-specific regulatory proteins to the basal RNA polymerase II transcription machinery. Mediator is recruited to promoters by direct interactions with regulatory proteins and serves as a scaffold for the assembly of a functional preinitiation complex with RNA polymerase II and the general transcription factors. The sequence is that of Mediator of RNA polymerase II transcription subunit 6 (MED6) from Homo sapiens (Human).